The chain runs to 369 residues: DNA replication and repair protein RecF (369 aa).

30-37 contributes to the ATP binding site; it reads GDNGSGKT.

Belongs to the RecF family.

It localises to the cytoplasm. The RecF protein is involved in DNA metabolism; it is required for DNA replication and normal SOS inducibility. RecF binds preferentially to single-stranded, linear DNA. It also seems to bind ATP. This is DNA replication and repair protein RecF from Pseudomonas aeruginosa (strain UCBPP-PA14).